A 213-amino-acid polypeptide reads, in one-letter code: ATP synthase peripheral stalk subunit OSCP, mitochondrial (213 aa).

Residues 1-23 (MAALAVSGLSQQVRCFSTSVVRP) constitute a mitochondrion transit peptide. Positions 5-23 (AVSGLSQQVRCFSTSVVRP) match the SIFI-degron motif. Residues K54, K60, K70, and K73 each carry the N6-acetyllysine modification. Position 90 is an N6-succinyllysine (K90). N6-acetyllysine; alternate occurs at positions 100, 158, and 162. 3 positions are modified to N6-succinyllysine; alternate: K100, K158, and K162. 3 positions are modified to N6-acetyllysine: K172, K176, and K192. Position 199 is an N6-succinyllysine (K199).

Belongs to the ATPase delta chain family. In terms of assembly, component of the ATP synthase complex composed at least of ATP5F1A/subunit alpha, ATP5F1B/subunit beta, ATP5MC1/subunit c (homooctomer), MT-ATP6/subunit a, MT-ATP8/subunit 8, ATP5ME/subunit e, ATP5MF/subunit f, ATP5MG/subunit g, ATP5MK/subunit k, ATP5MJ/subunit j, ATP5F1C/subunit gamma, ATP5F1D/subunit delta, ATP5F1E/subunit epsilon, ATP5PF/subunit F6, ATP5PB/subunit b, ATP5PD/subunit d, ATP5PO/subunit OSCP. ATP synthase complex consists of a soluble F(1) head domain (subunits alpha(3) and beta(3)) - the catalytic core - and a membrane F(0) domain - the membrane proton channel (subunits c, a, 8, e, f, g, k and j). These two domains are linked by a central stalk (subunits gamma, delta, and epsilon) rotating inside the F1 region and a stationary peripheral stalk (subunits F6, b, d, and OSCP). Acetylation at Lys-162 decreases ATP production. Deacetylated by SIRT3. In terms of processing, in response to mitochondrial stress, the precursor protein is ubiquitinated by the SIFI complex in the cytoplasm before mitochondrial import, leading to its degradation. Within the SIFI complex, UBR4 initiates ubiquitin chain that are further elongated or branched by KCMF1.

It is found in the mitochondrion. It localises to the mitochondrion inner membrane. Its function is as follows. Subunit OSCP, of the mitochondrial membrane ATP synthase complex (F(1)F(0) ATP synthase or Complex V) that produces ATP from ADP in the presence of a proton gradient across the membrane which is generated by electron transport complexes of the respiratory chain. ATP synthase complex consist of a soluble F(1) head domain - the catalytic core - and a membrane F(1) domain - the membrane proton channel. These two domains are linked by a central stalk rotating inside the F(1) region and a stationary peripheral stalk. During catalysis, ATP synthesis in the catalytic domain of F(1) is coupled via a rotary mechanism of the central stalk subunits to proton translocation. In vivo, can only synthesize ATP although its ATP hydrolase activity can be activated artificially in vitro. Part of the complex F(0) domain. Part of the complex F(0) domain and the peripheric stalk, which acts as a stator to hold the catalytic alpha(3)beta(3) subcomplex and subunit a/ATP6 static relative to the rotary elements. This Bos taurus (Bovine) protein is ATP synthase peripheral stalk subunit OSCP, mitochondrial.